Consider the following 316-residue polypeptide: Serine protease 45 (316 aa).

The first 38 residues, 1-38, serve as a signal peptide directing secretion; that stretch reads MAASLSRLSAGLAASRPLGLSRSFLLLVLLLLNSGYKG. A Peptidase S1 domain is found at 49–290; it reads WWPKNLDLSR…YSRWIKKQIS (242 aa). An intrachain disulfide couples C74 to C90. The active-site Charge relay system is the H89. N-linked (GlcNAc...) asparagine glycosylation occurs at N110. The Charge relay system role is filled by D137. N-linked (GlcNAc...) asparagine glycans are attached at residues N162 and N186. Cystine bridges form between C171–C248, C206–C229, and C238–C266. Catalysis depends on S242, which acts as the Charge relay system.

The protein belongs to the peptidase S1 family.

Its subcellular location is the secreted. In Bos taurus (Bovine), this protein is Serine protease 45 (PRSS45).